A 258-amino-acid chain; its full sequence is Dehydrodolichyl diphosphate synthase complex subunit nus1 (258 aa).

Residues 5 to 21 traverse the membrane as a helical segment; the sequence is IFFYLALWVIQSVYGAW.

This sequence belongs to the UPP synthase family. As to quaternary structure, forms an active dehydrodolichyl diphosphate synthase complex with SPAC4D7.04c. Mg(2+) is required as a cofactor.

It localises to the endoplasmic reticulum membrane. It carries out the reaction n isopentenyl diphosphate + (2E,6E)-farnesyl diphosphate = a di-trans,poly-cis-polyprenyl diphosphate + n diphosphate. Its pathway is protein modification; protein glycosylation. In terms of biological role, with SPAC4D7.04c, forms the dehydrodolichyl diphosphate synthase (DDS) complex, an essential component of the dolichol monophosphate (Dol-P) biosynthetic machinery. Adds multiple copies of isopentenyl pyrophosphate (IPP) to farnesyl pyrophosphate (FPP) to produce dehydrodolichyl diphosphate (Dedol-PP), a precursor of dolichol which is utilized as a sugar carrier in protein glycosylation in the endoplasmic reticulum (ER). This chain is Dehydrodolichyl diphosphate synthase complex subunit nus1 (nus1), found in Schizosaccharomyces pombe (strain 972 / ATCC 24843) (Fission yeast).